Here is a 206-residue protein sequence, read N- to C-terminus: 2-phospho-L-lactate guanylyltransferase (206 aa).

Belongs to the CofC family. As to quaternary structure, homodimer.

It catalyses the reaction (2S)-2-phospholactate + GTP + H(+) = (2S)-lactyl-2-diphospho-5'-guanosine + diphosphate. It participates in cofactor biosynthesis; coenzyme F420 biosynthesis. In terms of biological role, guanylyltransferase that catalyzes the activation of (2S)-2-phospholactate (2-PL) as (2S)-lactyl-2-diphospho-5'-guanosine, via the condensation of 2-PL with GTP. It is involved in the biosynthesis of coenzyme F420, a hydride carrier cofactor. The polypeptide is 2-phospho-L-lactate guanylyltransferase (Archaeoglobus profundus (strain DSM 5631 / JCM 9629 / NBRC 100127 / Av18)).